Consider the following 288-residue polypeptide: Protoheme IX farnesyltransferase (288 aa).

9 helical membrane passes run Val-6 to Leu-26, Phe-44 to Ile-64, Leu-89 to Ile-109, Val-111 to Phe-131, Ile-138 to Val-158, Leu-169 to Phe-189, Ile-213 to Ile-233, Leu-238 to Ile-258, and Ile-268 to Val-288.

Belongs to the UbiA prenyltransferase family. Protoheme IX farnesyltransferase subfamily.

It is found in the cell membrane. The catalysed reaction is heme b + (2E,6E)-farnesyl diphosphate + H2O = Fe(II)-heme o + diphosphate. It participates in porphyrin-containing compound metabolism; heme O biosynthesis; heme O from protoheme: step 1/1. Its function is as follows. Converts heme B (protoheme IX) to heme O by substitution of the vinyl group on carbon 2 of heme B porphyrin ring with a hydroxyethyl farnesyl side group. In Buchnera aphidicola subsp. Baizongia pistaciae (strain Bp), this protein is Protoheme IX farnesyltransferase.